A 286-amino-acid polypeptide reads, in one-letter code: 2-dehydro-3-deoxyphosphooctonate aldolase (286 aa).

The protein belongs to the KdsA family.

Its subcellular location is the cytoplasm. The enzyme catalyses D-arabinose 5-phosphate + phosphoenolpyruvate + H2O = 3-deoxy-alpha-D-manno-2-octulosonate-8-phosphate + phosphate. It functions in the pathway carbohydrate biosynthesis; 3-deoxy-D-manno-octulosonate biosynthesis; 3-deoxy-D-manno-octulosonate from D-ribulose 5-phosphate: step 2/3. It participates in bacterial outer membrane biogenesis; lipopolysaccharide biosynthesis. The chain is 2-dehydro-3-deoxyphosphooctonate aldolase from Bradyrhizobium sp. (strain BTAi1 / ATCC BAA-1182).